A 295-amino-acid chain; its full sequence is Tyrosine recombinase XerD (295 aa).

One can recognise a Core-binding (CB) domain in the interval 1–85 (MNTIIEEYLN…TIRSFHQFAL (85 aa)). Residues 106 to 289 (KLPDVLEIDE…SKSQIRKMYT (184 aa)) form the Tyr recombinase domain. Residues arginine 146, lysine 170, histidine 241, arginine 244, and histidine 267 contribute to the active site. The active-site O-(3'-phospho-DNA)-tyrosine intermediate is the tyrosine 276.

Belongs to the 'phage' integrase family. XerD subfamily. In terms of assembly, forms a cyclic heterotetrameric complex composed of two molecules of XerC and two molecules of XerD.

It localises to the cytoplasm. Functionally, site-specific tyrosine recombinase, which acts by catalyzing the cutting and rejoining of the recombining DNA molecules. The XerC-XerD complex is essential to convert dimers of the bacterial chromosome into monomers to permit their segregation at cell division. It also contributes to the segregational stability of plasmids. The protein is Tyrosine recombinase XerD of Staphylococcus epidermidis (strain ATCC 12228 / FDA PCI 1200).